Consider the following 520-residue polypeptide: D-aminopeptidase (520 aa).

The Nucleophile role is filled by Ser62. Lys65 functions as the Proton donor/acceptor in the catalytic mechanism. Residues 477-487 (QRSMDAPSPGE) form an important for specificity region. Residue Asp481 coordinates substrate.

It belongs to the peptidase S12 family. Homodimer.

The enzyme catalyses Release of an N-terminal D-amino acid from a peptide, Xaa-|-Yaa-, in which Xaa is preferably D-Ala, D-Ser or D-Thr. D-amino acid amides and methyl esters also are hydrolyzed, as is glycine amide.. Inhibited by beta-lactam compounds such as 6-aminopenicillic acid, 7-aminocephalosporanic acid, benzylpenicillin and ampicillin. Inhibited by p-chloromercuribenzoate. In terms of biological role, hydrolyzes N-terminal residues in D-amino acid-containing peptides. The protein is D-aminopeptidase (dap) of Brucella anthropi (Ochrobactrum anthropi).